The primary structure comprises 71 residues: Augerpeptide-s7a (71 aa).

The first 20 residues, 1–20, serve as a signal peptide directing secretion; that stretch reads MSALKFVLICGLVLLLIETI. A propeptide spanning residues 21–29 is cleaved from the precursor; the sequence is PGVSLNLMR. Disulfide bonds link Cys36-Cys48, Cys42-Cys65, and Cys47-Cys68.

Expressed by the venom duct.

It localises to the secreted. In terms of biological role, elicits an uncoordinated twisting syndrome when injected into C.elegans, but has no effect on mice. This chain is Augerpeptide-s7a, found in Terebra subulata (Chocolate spotted auger).